Consider the following 752-residue polypeptide: DNA ligase (752 aa).

Residues 48 to 52 (DADYD), 97 to 98 (SL), and E131 each bind NAD(+). The active-site N6-AMP-lysine intermediate is the K133. Positions 154, 189, 305, and 329 each coordinate NAD(+). Zn(2+) contacts are provided by C434, C437, C452, and C458. A compositionally biased stretch (basic and acidic residues) spans 599–615 (ADEGRRASLQPQRDKAW). Residues 599 to 618 (ADEGRRASLQPQRDKAWADT) are disordered. Positions 673-752 (ATQSAVAGLT…EQWLDRIGDA (80 aa)) constitute a BRCT domain.

It belongs to the NAD-dependent DNA ligase family. LigA subfamily. Mg(2+) serves as cofactor. Requires Mn(2+) as cofactor.

The catalysed reaction is NAD(+) + (deoxyribonucleotide)n-3'-hydroxyl + 5'-phospho-(deoxyribonucleotide)m = (deoxyribonucleotide)n+m + AMP + beta-nicotinamide D-nucleotide.. Functionally, DNA ligase that catalyzes the formation of phosphodiester linkages between 5'-phosphoryl and 3'-hydroxyl groups in double-stranded DNA using NAD as a coenzyme and as the energy source for the reaction. It is essential for DNA replication and repair of damaged DNA. The chain is DNA ligase from Jannaschia sp. (strain CCS1).